The chain runs to 321 residues: tRNA(Ile)-lysidine synthase (321 aa).

Position 30–35 (30–35 (SGGSDS)) interacts with ATP.

This sequence belongs to the tRNA(Ile)-lysidine synthase family.

It is found in the cytoplasm. The enzyme catalyses cytidine(34) in tRNA(Ile2) + L-lysine + ATP = lysidine(34) in tRNA(Ile2) + AMP + diphosphate + H(+). Ligates lysine onto the cytidine present at position 34 of the AUA codon-specific tRNA(Ile) that contains the anticodon CAU, in an ATP-dependent manner. Cytidine is converted to lysidine, thus changing the amino acid specificity of the tRNA from methionine to isoleucine. In Chlamydia trachomatis serovar D (strain ATCC VR-885 / DSM 19411 / UW-3/Cx), this protein is tRNA(Ile)-lysidine synthase.